A 615-amino-acid polypeptide reads, in one-letter code: Protein PSK SIMULATOR 2 (615 aa).

Gly-2 carries N-myristoyl glycine lipidation. Positions 16–27 (KKLRSNDDDKSR) are enriched in basic and acidic residues. Disordered stretches follow at residues 16–59 (KKLR…KSSK) and 506–529 (AHGVKLQETNHVSPPNNRTISNTQ). The span at 42–52 (SDSYYSDNYGG) shows a compositional bias: low complexity. Residues 512-529 (QETNHVSPPNNRTISNTQ) are compositionally biased toward polar residues.

The protein resides in the nucleus. In terms of biological role, promotes seedling growth probably via the regulation of phytosulfokine (PSK) signaling; PSK are peptide phytohormones acting as growth factors. Involved in PSK-induced root growth. Together with PSI1 and PSI3, required during vegetative growth and reproduction. The sequence is that of Protein PSK SIMULATOR 2 from Arabidopsis thaliana (Mouse-ear cress).